Here is a 420-residue protein sequence, read N- to C-terminus: Putative polyketide beta-ketoacyl synthase 1 (420 aa).

Residues 3 to 414 form the Ketosynthase family 3 (KS3) domain; the sequence is QRRVAITGIE…GFQSAMVLTS (412 aa). Residues Cys-169, His-307, and His-344 each act as for beta-ketoacyl synthase activity in the active site.

The protein belongs to the thiolase-like superfamily. Beta-ketoacyl-ACP synthases family.

Its pathway is antifungal biosynthesis; monensin biosynthesis. The polypeptide is Putative polyketide beta-ketoacyl synthase 1 (Streptomyces virginiae (Streptomyces cinnamonensis)).